A 262-amino-acid polypeptide reads, in one-letter code: uncharacterized protein (262 aa).

6 helical membrane passes run 21 to 41 (ILIT…VGKF), 94 to 114 (IVSN…LAYL), 139 to 159 (LLIL…GVNL), 164 to 184 (LIAV…AVVV), 205 to 225 (IVIL…LEPI), and 240 to 260 (LLAA…SMLF).

It is found in the cell membrane. This is an uncharacterized protein from Methanocaldococcus jannaschii (strain ATCC 43067 / DSM 2661 / JAL-1 / JCM 10045 / NBRC 100440) (Methanococcus jannaschii).